The sequence spans 473 residues: Ribulose bisphosphate carboxylase large chain (473 aa).

A propeptide spanning residues 1–2 (MS) is cleaved from the precursor. P3 carries the post-translational modification N-acetylproline. At K14 the chain carries N6,N6,N6-trimethyllysine. Residues N123 and T173 each coordinate substrate. The active-site Proton acceptor is the K175. K177 is a substrate binding site. Mg(2+) is bound by residues K201, D203, and E204. K201 is subject to N6-carboxylysine. The active-site Proton acceptor is H294. Residues R295, H327, and S379 each contribute to the substrate site.

It belongs to the RuBisCO large chain family. Type I subfamily. Heterohexadecamer of 8 large chains and 8 small chains; disulfide-linked. The disulfide link is formed within the large subunit homodimers. It depends on Mg(2+) as a cofactor. In terms of processing, the disulfide bond which can form in the large chain dimeric partners within the hexadecamer appears to be associated with oxidative stress and protein turnover.

The protein localises to the plastid. The protein resides in the chloroplast. It catalyses the reaction 2 (2R)-3-phosphoglycerate + 2 H(+) = D-ribulose 1,5-bisphosphate + CO2 + H2O. The catalysed reaction is D-ribulose 1,5-bisphosphate + O2 = 2-phosphoglycolate + (2R)-3-phosphoglycerate + 2 H(+). RuBisCO catalyzes two reactions: the carboxylation of D-ribulose 1,5-bisphosphate, the primary event in carbon dioxide fixation, as well as the oxidative fragmentation of the pentose substrate in the photorespiration process. Both reactions occur simultaneously and in competition at the same active site. The protein is Ribulose bisphosphate carboxylase large chain of Ajuga chamaepitys (Yellow bugle).